Here is a 481-residue protein sequence, read N- to C-terminus: Surface lipoprotein assembly modifier 2 (481 aa).

An N-terminal signal peptide occupies residues 1–24 (MKNGVKQLFLLSLIGLSLTNVAWA). The N-terminal domain stretch occupies residues 24–192 (AEVARPKNDT…QYLLTLNQRN (169 aa)). The interval 193–481 (QWIWQVGLNF…RIYLEIGKIF (289 aa)) is C-terminal probable beta barrel. Transmembrane regions (beta stranded) follow at residues 194 to 204 (WIWQVGLNFLN), 223 to 243 (AWEK…KKWP), 248 to 257 (FFSKTMFNGN), 271 to 281 (TVRIGGGLGYQ), 285 to 295 (VEVSLFPFQEK), 315 to 325 (LGIRLENVDWL), 329 to 339 (WQISTALEYGE), 353 to 363 (YFVSSTLFYLP), 368 to 377 (FWFVGMDFHR), 390 to 399 (KTLRLGWGQD), 404 to 414 (ISSRLTFSYAN), 432 to 441 (YTTTITLWHR), 448 to 458 (LTPKLSWDYQK), and 471 to 481 (NRIYLEIGKIF).

Belongs to the Slam family.

It localises to the cell outer membrane. Its function is as follows. Required for correct export to the cell surface of some cell outer membrane lipoproteins. The polypeptide is Surface lipoprotein assembly modifier 2 (Haemophilus influenzae (strain ATCC 51907 / DSM 11121 / KW20 / Rd)).